Here is a 450-residue protein sequence, read N- to C-terminus: Tubulin alpha-6 chain (450 aa).

GTP is bound by residues Gln11, Glu71, Gly144, Thr145, Thr179, Asn206, and Asn228. Glu71 lines the Mg(2+) pocket. Glu254 is a catalytic residue. At Thr349 the chain carries Phosphothreonine. A disordered region spans residues 430–450 (KDYEEVGAEGGDDEDDEGEEY). Acidic residues predominate over residues 431-450 (DYEEVGAEGGDDEDDEGEEY).

The protein belongs to the tubulin family. As to quaternary structure, dimer of alpha and beta chains. A typical microtubule is a hollow water-filled tube with an outer diameter of 25 nm and an inner diameter of 15 nM. Alpha-beta heterodimers associate head-to-tail to form protofilaments running lengthwise along the microtubule wall with the beta-tubulin subunit facing the microtubule plus end conferring a structural polarity. Microtubules usually have 13 protofilaments but different protofilament numbers can be found in some organisms and specialized cells. Interacts with TFCB. It depends on Mg(2+) as a cofactor. Post-translationally, undergoes a tyrosination/detyrosination cycle, the cyclic removal and re-addition of a C-terminal tyrosine residue by the enzymes tubulin tyrosine carboxypeptidase (TTCP) and tubulin tyrosine ligase (TTL), respectively. In terms of processing, acetylation of alpha chains at Lys-40 stabilizes microtubules and affects affinity and processivity of microtubule motors. This modification has a role in multiple cellular functions, ranging from cell motility, cell cycle progression or cell differentiation to intracellular trafficking and signaling.

It is found in the cytoplasm. It localises to the cytoskeleton. The catalysed reaction is GTP + H2O = GDP + phosphate + H(+). Its function is as follows. Tubulin is the major constituent of microtubules, a cylinder consisting of laterally associated linear protofilaments composed of alpha- and beta-tubulin heterodimers. Microtubules grow by the addition of GTP-tubulin dimers to the microtubule end, where a stabilizing cap forms. Below the cap, tubulin dimers are in GDP-bound state, owing to GTPase activity of alpha-tubulin. The protein is Tubulin alpha-6 chain (TUBA6) of Arabidopsis thaliana (Mouse-ear cress).